The following is a 639-amino-acid chain: 1-deoxy-D-xylulose-5-phosphate synthase (639 aa).

Residues H79 and 120 to 122 (GHS) each bind thiamine diphosphate. D151 serves as a coordination point for Mg(2+). Thiamine diphosphate-binding positions include 152–153 (GG), N180, Y288, and E370. N180 is a binding site for Mg(2+).

The protein belongs to the transketolase family. DXPS subfamily. Homodimer. Requires Mg(2+) as cofactor. It depends on thiamine diphosphate as a cofactor.

The enzyme catalyses D-glyceraldehyde 3-phosphate + pyruvate + H(+) = 1-deoxy-D-xylulose 5-phosphate + CO2. Its pathway is metabolic intermediate biosynthesis; 1-deoxy-D-xylulose 5-phosphate biosynthesis; 1-deoxy-D-xylulose 5-phosphate from D-glyceraldehyde 3-phosphate and pyruvate: step 1/1. Functionally, catalyzes the acyloin condensation reaction between C atoms 2 and 3 of pyruvate and glyceraldehyde 3-phosphate to yield 1-deoxy-D-xylulose-5-phosphate (DXP). The chain is 1-deoxy-D-xylulose-5-phosphate synthase from Methylococcus capsulatus (strain ATCC 33009 / NCIMB 11132 / Bath).